The chain runs to 842 residues: Elongation factor 2 (842 aa).

A tr-type G domain is found at 17–346 (ANVRNMSVIA…MIVLHLPSPV (330 aa)). GTP-binding positions include 26–33 (AHVDHGKS), 158–161 (NKVD), and 213–215 (SGL). Residue His-699 is modified to Diphthamide.

Belongs to the TRAFAC class translation factor GTPase superfamily. Classic translation factor GTPase family. EF-G/EF-2 subfamily.

The protein localises to the cytoplasm. The enzyme catalyses GTP + H2O = GDP + phosphate + H(+). The protein operates within protein biosynthesis; polypeptide chain elongation. Its function is as follows. Catalyzes the GTP-dependent ribosomal translocation step during translation elongation. During this step, the ribosome changes from the pre-translocational (PRE) to the post-translocational (POST) state as the newly formed A-site-bound peptidyl-tRNA and P-site-bound deacylated tRNA move to the P and E sites, respectively. Catalyzes the coordinated movement of the two tRNA molecules, the mRNA and conformational changes in the ribosome. This is Elongation factor 2 (EFT2) from Meyerozyma guilliermondii (strain ATCC 6260 / CBS 566 / DSM 6381 / JCM 1539 / NBRC 10279 / NRRL Y-324) (Yeast).